We begin with the raw amino-acid sequence, 152 residues long: 3-dehydroquinate dehydratase (152 aa).

The Proton acceptor role is filled by Y23. Residues N74, H80, and D87 each contribute to the substrate site. H100 acts as the Proton donor in catalysis. Substrate is bound by residues 101–102 (LS) and R111.

It belongs to the type-II 3-dehydroquinase family. In terms of assembly, homododecamer.

The catalysed reaction is 3-dehydroquinate = 3-dehydroshikimate + H2O. It functions in the pathway metabolic intermediate biosynthesis; chorismate biosynthesis; chorismate from D-erythrose 4-phosphate and phosphoenolpyruvate: step 3/7. In terms of biological role, catalyzes a trans-dehydration via an enolate intermediate. The polypeptide is 3-dehydroquinate dehydratase (Clostridium botulinum (strain Langeland / NCTC 10281 / Type F)).